Reading from the N-terminus, the 393-residue chain is Chorismate synthase (393 aa).

NADP(+)-binding residues include Arg-40 and Arg-46. FMN contacts are provided by residues Arg-129–Ser-131, Gln-250–Ala-251, Gly-301, Lys-316–Thr-320, and Arg-342.

It belongs to the chorismate synthase family. Homotetramer. The cofactor is FMNH2.

The enzyme catalyses 5-O-(1-carboxyvinyl)-3-phosphoshikimate = chorismate + phosphate. Its pathway is metabolic intermediate biosynthesis; chorismate biosynthesis; chorismate from D-erythrose 4-phosphate and phosphoenolpyruvate: step 7/7. Catalyzes the anti-1,4-elimination of the C-3 phosphate and the C-6 proR hydrogen from 5-enolpyruvylshikimate-3-phosphate (EPSP) to yield chorismate, which is the branch point compound that serves as the starting substrate for the three terminal pathways of aromatic amino acid biosynthesis. This reaction introduces a second double bond into the aromatic ring system. This is Chorismate synthase from Acidobacterium capsulatum (strain ATCC 51196 / DSM 11244 / BCRC 80197 / JCM 7670 / NBRC 15755 / NCIMB 13165 / 161).